We begin with the raw amino-acid sequence, 272 residues long: Putative hydro-lyase BRADO2538 (272 aa).

The protein belongs to the D-glutamate cyclase family.

This Bradyrhizobium sp. (strain ORS 278) protein is Putative hydro-lyase BRADO2538.